Consider the following 213-residue polypeptide: Phosphoribosyl-dephospho-CoA transferase (213 aa).

Active-site residues include aspartate 135 and aspartate 137.

It belongs to the MdcG family.

It carries out the reaction apo-[malonate decarboxylase ACP] + 2'-(5''-triphospho-alpha-D-ribosyl)-3'-dephospho-CoA = holo-[malonate decarboxylase ACP] + diphosphate. In terms of biological role, transfers 2'-(5-triphosphoribosyl)-3'-dephosphocoenzyme-A to the apo-[acyl-carrier-protein] of the malonate decarboxylase to yield holo-[acyl-carrier-protein]. This Xanthomonas euvesicatoria pv. vesicatoria (strain 85-10) (Xanthomonas campestris pv. vesicatoria) protein is Phosphoribosyl-dephospho-CoA transferase.